Consider the following 251-residue polypeptide: 3-deoxy-manno-octulosonate cytidylyltransferase (251 aa).

Belongs to the KdsB family.

It localises to the cytoplasm. It catalyses the reaction 3-deoxy-alpha-D-manno-oct-2-ulosonate + CTP = CMP-3-deoxy-beta-D-manno-octulosonate + diphosphate. Its pathway is nucleotide-sugar biosynthesis; CMP-3-deoxy-D-manno-octulosonate biosynthesis; CMP-3-deoxy-D-manno-octulosonate from 3-deoxy-D-manno-octulosonate and CTP: step 1/1. The protein operates within bacterial outer membrane biogenesis; lipopolysaccharide biosynthesis. Activates KDO (a required 8-carbon sugar) for incorporation into bacterial lipopolysaccharide in Gram-negative bacteria. The sequence is that of 3-deoxy-manno-octulosonate cytidylyltransferase from Vibrio vulnificus (strain YJ016).